An 892-amino-acid chain; its full sequence is MTASHSETPSTKPDASTFISDHLQVDRSKLSQMYLHYVETKDKYPHAVLLYRVGDFFECYFQDAVKLAQELELVLTSKQAGEQGRVAMSGVPHHAWERYATLLVEKGYAVVICDQVEDASEAAGRLVRREVTRILTPGTLLEEGMLKSSRNNYLAAVVIAANHWGLAYADISTGEFLTTQGSDLEHLTQELMRLQPSEVLVPTNAPDLGSLLRPGETSPHLPECLPPSFCYSLRSQVPFSQGEARPRLLQKFKVRSLEGLGCDRFPLAVRAAGGLLEYLEDTQKENPVPLQRLRTYTVTDYLIVDSQTRRNLEITQTVRDGTFHGSLLWSLDRTSTAMGGRALRRWLLQPLLDIKGIRARQDTIQELMENTPLRQDLRQLLRQIYDLERLTGRAGSGTANARDLVALADSLSRLPELSHLVTESHSPFLKALQKVPSVLEELAQKLHAHLVESPPILIKEGGLIRPSVNPLLDERKATVEADQQWIANLEVDERAKTGISTLKVGFNKTFGYYISISRTKADQVPANYIRKQTLTNEERYITPDLKEREARILSARDDLNQLEYEIFTALREEVAQEAEVIRNLSRAVAAADVLCGLAELAVHQGYCRPEMLSGREINIVDGRHPVVEQSLPAGFFVPNSTQLGQESLVSSHLSLADNQEQITNTSLREAAPTTTLSTSDQGQMTNDNPDLIILTGPNASGKSCYLRQVGLIQLMAQIGSFVPARLAKLGICDRIFTRVGAVDDLATGQSTFMVEMNETANILNHATSRSLVLLDEIGRGTATFDGLSIAWAVAEYIAVDIRARTIFATHYHELNELASIVPNVANYQVTVKELPDQIIFLHQVQPGGADKSYGIEAGRLAGLPAVVIQRAKQVMGQIEKHSKIAMGLQNLD.

A disordered region spans residues 663–684 (TNTSLREAAPTTTLSTSDQGQM). ATP is bound at residue 696 to 703 (GPNASGKS).

The protein belongs to the DNA mismatch repair MutS family.

Its function is as follows. This protein is involved in the repair of mismatches in DNA. It is possible that it carries out the mismatch recognition step. This protein has a weak ATPase activity. The chain is DNA mismatch repair protein MutS from Nostoc punctiforme (strain ATCC 29133 / PCC 73102).